The primary structure comprises 378 residues: Squalene methyltransferase 1 (378 aa).

The helical transmembrane segment at 17–37 threads the bilayer; the sequence is LLTWKGVAGLVVAITLGYLII.

It belongs to the class I-like SAM-binding methyltransferase superfamily. Erg6/SMT family.

The protein resides in the microsome membrane. It carries out the reaction squalene + 2 S-adenosyl-L-methionine = 3,22-dimethyl-1,2,23,24-tetradehydro-2,3,22,23-tetrahydrosqualene + 2 S-adenosyl-L-homocysteine + 2 H(+). Its function is as follows. Converts squalene to mono- and dimethyl derivatives, but not to tri- and tetramethylated products. Unable to methylate cycloartenol, zymosterol or lanosterol. Methylates both C-3 and C22 positions, but only C-3 position in monomethylated products. Produces mainly dimethylated squalene. This is Squalene methyltransferase 1 (TMT-1) from Botryococcus braunii (Green alga).